A 1551-amino-acid chain; its full sequence is Serine/threonine-protein kinase MRCK gamma (1551 aa).

One can recognise a Protein kinase domain in the interval 71-337 (FEILKVIGRG…LDDFRKHPFF (267 aa)). Residues 77–85 (IGRGAFGEV) and Lys-100 contribute to the ATP site. The active-site Proton acceptor is Asp-195. Phosphoserine; by autocatalysis occurs at positions 216 and 228. A Phosphothreonine; by autocatalysis modification is found at Thr-234. Residues 338–408 (EGVDWERLAT…TSGSPFDVQS (71 aa)) form the AGC-kinase C-terminal domain. 2 coiled-coil regions span residues 442-675 (QPQE…TESN) and 729-801 (KARR…QARG). The disordered stretch occupies residues 578-605 (QESSQAKTVHAAPETNGIGSPEGQSQEA). The segment at 820 to 886 (TEKDSAKDPG…SHTLRPRSFP (67 aa)) is disordered. Residues 839–849 (AEAELRPEGRR) show a composition bias toward basic and acidic residues. The Phorbol-ester/DAG-type zinc-finger motif lies at 877 to 926 (SHTLRPRSFPSPTKCLRCTSLMLGLGRQGLGCDTCGYFCHSACASQAPPC). The 120-residue stretch at 946–1065 (GTAYEGFLSV…WLQVLGELQR (120 aa)) folds into the PH domain. The CNH domain maps to 1091-1365 (LPHALCAAVI…RPLNPEGSLF (275 aa)). One can recognise a CRIB domain in the interval 1436-1449 (ISPPTNFNHLVHVG). The disordered stretch occupies residues 1441–1551 (NFNHLVHVGP…PPDPESESSP (111 aa)). Over residues 1455 to 1468 (PNTRDGTRAQEQKS) the composition is skewed to basic and acidic residues. At Ser-1481 the chain carries Phosphoserine. Polar residues predominate over residues 1511 to 1527 (TSLSSESVSCPQGSLSP).

It belongs to the protein kinase superfamily. AGC Ser/Thr protein kinase family. DMPK subfamily. As to quaternary structure, homodimer and homotetramer via the coiled coil regions. Interacts tightly with GTP-bound but not GDP-bound CDC42. Requires Mg(2+) as cofactor.

The protein resides in the cytoplasm. The enzyme catalyses L-seryl-[protein] + ATP = O-phospho-L-seryl-[protein] + ADP + H(+). It carries out the reaction L-threonyl-[protein] + ATP = O-phospho-L-threonyl-[protein] + ADP + H(+). Its activity is regulated as follows. Maintained in an inactive, closed conformation by an interaction between the kinase domain and the negative autoregulatory C-terminal coiled-coil region. Agonist binding to the phorbol ester binding site disrupts this, releasing the kinase domain to allow N-terminus-mediated dimerization and kinase activation by transautophosphorylation. In terms of biological role, may act as a downstream effector of CDC42 in cytoskeletal reorganization. Contributes to the actomyosin contractility required for cell invasion, through the regulation of MYPT1 and thus MLC2 phosphorylation. This is Serine/threonine-protein kinase MRCK gamma from Mus musculus (Mouse).